A 100-amino-acid polypeptide reads, in one-letter code: Small ribosomal subunit protein uS14c (100 aa).

The protein belongs to the universal ribosomal protein uS14 family. As to quaternary structure, part of the 30S ribosomal subunit.

The protein resides in the plastid. The protein localises to the chloroplast. In terms of biological role, binds 16S rRNA, required for the assembly of 30S particles. The polypeptide is Small ribosomal subunit protein uS14c (Chlorella vulgaris (Green alga)).